The primary structure comprises 42 residues: Potassium channel toxin gamma-KTx 1.2 (42 aa).

4 disulfide bridges follow: Cys-5–Cys-23, Cys-11–Cys-34, Cys-20–Cys-39, and Cys-24–Cys-41.

This sequence belongs to the ergtoxin family. Gamma-KTx 1 subfamily. As to expression, expressed by the venom gland.

It localises to the secreted. Blocks Kv11/ERG potassium channels. In Centruroides elegans (Bark scorpion), this protein is Potassium channel toxin gamma-KTx 1.2.